The sequence spans 375 residues: Succinyl-diaminopimelate desuccinylase (375 aa).

Residue H66 participates in Zn(2+) binding. The active site involves D68. Zn(2+) is bound at residue D99. E133 functions as the Proton acceptor in the catalytic mechanism. Residues E134, E162, and H348 each contribute to the Zn(2+) site.

This sequence belongs to the peptidase M20A family. DapE subfamily. In terms of assembly, homodimer. Requires Zn(2+) as cofactor. The cofactor is Co(2+).

It carries out the reaction N-succinyl-(2S,6S)-2,6-diaminopimelate + H2O = (2S,6S)-2,6-diaminopimelate + succinate. Its pathway is amino-acid biosynthesis; L-lysine biosynthesis via DAP pathway; LL-2,6-diaminopimelate from (S)-tetrahydrodipicolinate (succinylase route): step 3/3. In terms of biological role, catalyzes the hydrolysis of N-succinyl-L,L-diaminopimelic acid (SDAP), forming succinate and LL-2,6-diaminopimelate (DAP), an intermediate involved in the bacterial biosynthesis of lysine and meso-diaminopimelic acid, an essential component of bacterial cell walls. This chain is Succinyl-diaminopimelate desuccinylase, found in Yersinia pestis bv. Antiqua (strain Antiqua).